We begin with the raw amino-acid sequence, 230 residues long: Ribonuclease 3 (230 aa).

Residues 5–125 (YSRLYKILGY…IIGAIYLDSD (121 aa)) enclose the RNase III domain. A Mg(2+)-binding site is contributed by Glu-40. Asp-44 is an active-site residue. Residues Asp-111 and Glu-114 each contribute to the Mg(2+) site. The active site involves Glu-114. A DRBM domain is found at 153-223 (DSKSKLQEIL…AEKMIQILSQ (71 aa)).

It belongs to the ribonuclease III family. As to quaternary structure, homodimer. It depends on Mg(2+) as a cofactor.

Its subcellular location is the cytoplasm. It catalyses the reaction Endonucleolytic cleavage to 5'-phosphomonoester.. Digests double-stranded RNA. Involved in the processing of primary rRNA transcript to yield the immediate precursors to the large and small rRNAs (23S and 16S). Processes some mRNAs, and tRNAs when they are encoded in the rRNA operon. Processes pre-crRNA and tracrRNA of type II CRISPR loci if present in the organism. The protein is Ribonuclease 3 of Francisella philomiragia subsp. philomiragia (strain ATCC 25017 / CCUG 19701 / FSC 153 / O#319-036).